Reading from the N-terminus, the 440-residue chain is D-serine dehydratase (440 aa).

Lys-116 carries the N6-(pyridoxal phosphate)lysine modification.

Belongs to the serine/threonine dehydratase family. DsdA subfamily. Monomer. It depends on pyridoxal 5'-phosphate as a cofactor.

It catalyses the reaction D-serine = pyruvate + NH4(+). This Salmonella choleraesuis (strain SC-B67) protein is D-serine dehydratase.